Reading from the N-terminus, the 443-residue chain is Structure-specific endonuclease subunit SLX1 homolog (443 aa).

Residues 1–27 (METFILSSDSDDDSGPPPSKRRTIEGI) are disordered. The 88-residue stretch at 171-258 (EFYGVYCLIS…PLVSKSLKEK (88 aa)) folds into the GIY-YIG domain. The SLX1-type zinc finger occupies 340-395 (CRICGKDIEKLWSLVRCISATCPSHFHSKCLSENGLKLKNEHVDHVYPLKANCPTC).

Belongs to the SLX1 family. As to quaternary structure, forms a heterodimer with him-18/slx-4. A divalent metal cation is required as a cofactor.

The protein localises to the nucleus. Its function is as follows. Catalytic subunit of a heterodimeric structure-specific endonuclease that resolves DNA secondary structures generated during DNA repair and recombination. Has endonuclease activity towards branched DNA substrates, introducing single-strand cuts in duplex DNA close to junctions with ss-DNA (Potential). Has a preference for replication forks over 5' flap structures or Holliday junctions and shows much lower activity toward 3' flap structures. Required for proper crossover distribution through inhibition of crossover formation at the central region of chromosomes. This is Structure-specific endonuclease subunit SLX1 homolog from Caenorhabditis elegans.